Here is a 62-residue protein sequence, read N- to C-terminus: Large ribosomal subunit protein eL24 (62 aa).

The Zn(2+) site is built by C6, C9, C32, and C36. Residues 6–36 (CSFCGADIPPGYGIMYVRSDGTVQRFCSRKC) form a C4-type zinc finger.

Belongs to the eukaryotic ribosomal protein eL24 family. In terms of assembly, part of the 50S ribosomal subunit. Forms a cluster with proteins L3 and L14. Zn(2+) serves as cofactor.

Functionally, binds to the 23S rRNA. The polypeptide is Large ribosomal subunit protein eL24 (Pyrobaculum calidifontis (strain DSM 21063 / JCM 11548 / VA1)).